Here is a 576-residue protein sequence, read N- to C-terminus: Arginine--tRNA ligase (576 aa).

The short motif at 122–132 is the 'HIGH' region element; it reads PNVAKEMHVGH.

Belongs to the class-I aminoacyl-tRNA synthetase family. In terms of assembly, monomer.

The protein resides in the cytoplasm. It catalyses the reaction tRNA(Arg) + L-arginine + ATP = L-arginyl-tRNA(Arg) + AMP + diphosphate. The sequence is that of Arginine--tRNA ligase from Pectobacterium carotovorum subsp. carotovorum (strain PC1).